Consider the following 43-residue polypeptide: Protein PsbN (43 aa).

The chain crosses the membrane as a helical span at residues 5 to 27 (TLVAISISGLLVSFTGYALYTAF).

This sequence belongs to the PsbN family.

The protein resides in the plastid. Its subcellular location is the chloroplast thylakoid membrane. Its function is as follows. May play a role in photosystem I and II biogenesis. This Coelogyne cristata (Orchid) protein is Protein PsbN.